We begin with the raw amino-acid sequence, 195 residues long: Recombination protein RecR (195 aa).

The C4-type zinc finger occupies 54 to 69; it reads CTICGSYTEDEICSIC. The Toprim domain occupies 77–172; the sequence is ATICVVGFPQ…NITRLASGLP (96 aa).

It belongs to the RecR family.

Functionally, may play a role in DNA repair. It seems to be involved in an RecBC-independent recombinational process of DNA repair. It may act with RecF and RecO. The chain is Recombination protein RecR from Treponema denticola (strain ATCC 35405 / DSM 14222 / CIP 103919 / JCM 8153 / KCTC 15104).